We begin with the raw amino-acid sequence, 203 residues long: MKIGILGGTFDPIHYGHLWFAEYAREKFKLDKVFFIPNRVPSHREIPIATSKQRYEMVLLATLNNPYFEVLPIELEREGVSYMVDTIRDLSTYFSNAELYLLLGNDAFRDFLKWKDPYKIVEKVSIIVGSRGEEYYTNDLKDFIKTFENKIFFLDFPYYPISAKEIRDRVKKGLSIKYLVPENVEEYIIKNSVYCEEDQKDVK.

This sequence belongs to the NadD family.

The catalysed reaction is nicotinate beta-D-ribonucleotide + ATP + H(+) = deamido-NAD(+) + diphosphate. The protein operates within cofactor biosynthesis; NAD(+) biosynthesis; deamido-NAD(+) from nicotinate D-ribonucleotide: step 1/1. Catalyzes the reversible adenylation of nicotinate mononucleotide (NaMN) to nicotinic acid adenine dinucleotide (NaAD). This Dictyoglomus turgidum (strain DSM 6724 / Z-1310) protein is Probable nicotinate-nucleotide adenylyltransferase.